We begin with the raw amino-acid sequence, 73 residues long: Plasticin-A1 (73 aa).

An N-terminal signal peptide occupies residues 1-22 (MAFLKKSLFLVLFLAIVPLSIC). Residues 23–42 (EEEKREEENEEKQEDDDQSE) constitute a propeptide that is removed on maturation. The tract at residues 25-45 (EKREEENEEKQEDDDQSEKRG) is disordered. The span at 30–40 (ENEEKQEDDDQ) shows a compositional bias: acidic residues. Position 70 is a glycine amide (glycine 70). Residues 72–73 (ES) constitute a propeptide that is removed on maturation.

This sequence belongs to the frog skin active peptide (FSAP) family. Plasticin subfamily. As to expression, expressed by the skin glands.

It is found in the secreted. It localises to the target cell membrane. Its function is as follows. Peptide with no antimicrobial activity. May act in synergy with cationic peptides by enhancing their activity. Has a moderate hemolytic activity. This Agalychnis annae (Blue-sided leaf frog) protein is Plasticin-A1.